Consider the following 367-residue polypeptide: Alcohol dehydrogenase 2 (367 aa).

Zn(2+)-binding residues include Cys-48, His-74, Cys-107, Cys-110, Cys-113, Cys-121, and Cys-163. Residues 187 to 193, Asp-212, Lys-216, 286 to 288, and Arg-361 contribute to the NAD(+) site; these read GAGGGLG and VGI.

It belongs to the zinc-containing alcohol dehydrogenase family. Homotetramer. Zn(2+) serves as cofactor.

Its subcellular location is the cytoplasm. The enzyme catalyses a primary alcohol + NAD(+) = an aldehyde + NADH + H(+). It catalyses the reaction a secondary alcohol + NAD(+) = a ketone + NADH + H(+). The polypeptide is Alcohol dehydrogenase 2 (alcB) (Emericella nidulans (strain FGSC A4 / ATCC 38163 / CBS 112.46 / NRRL 194 / M139) (Aspergillus nidulans)).